Reading from the N-terminus, the 336-residue chain is Glyceraldehyde-3-phosphate dehydrogenase (336 aa).

NAD(+) is bound by residues 12–13, D35, R79, and S121; that span reads RI. D-glyceraldehyde 3-phosphate is bound by residues 152-154 and T183; that span reads SCT. C153 acts as the Nucleophile in catalysis. N184 lines the NAD(+) pocket. D-glyceraldehyde 3-phosphate is bound by residues R198, 211–212, and R234; that span reads TG. Residue N317 participates in NAD(+) binding.

It belongs to the glyceraldehyde-3-phosphate dehydrogenase family. As to quaternary structure, homotetramer.

It localises to the cytoplasm. It carries out the reaction D-glyceraldehyde 3-phosphate + phosphate + NAD(+) = (2R)-3-phospho-glyceroyl phosphate + NADH + H(+). It participates in carbohydrate degradation; glycolysis; pyruvate from D-glyceraldehyde 3-phosphate: step 1/5. Resistant to pentalenolactone. In terms of biological role, catalyzes the oxidative phosphorylation of glyceraldehyde 3-phosphate (G3P) to 1,3-bisphosphoglycerate (BPG) using the cofactor NAD. The first reaction step involves the formation of a hemiacetal intermediate between G3P and a cysteine residue, and this hemiacetal intermediate is then oxidized to a thioester, with concomitant reduction of NAD to NADH. The reduced NADH is then exchanged with the second NAD, and the thioester is attacked by a nucleophilic inorganic phosphate to produce BPG. The protein is Glyceraldehyde-3-phosphate dehydrogenase (gap) of Streptomyces coelicolor (strain ATCC BAA-471 / A3(2) / M145).